A 275-amino-acid polypeptide reads, in one-letter code: 3-methyl-2-oxobutanoate hydroxymethyltransferase (275 aa).

Mg(2+) contacts are provided by D44 and D83. 3-methyl-2-oxobutanoate-binding positions include D44–S45, D83, and K113. E115 serves as a coordination point for Mg(2+). E182 acts as the Proton acceptor in catalysis.

The protein belongs to the PanB family. In terms of assembly, homodecamer; pentamer of dimers. The cofactor is Mg(2+).

It is found in the cytoplasm. It catalyses the reaction 3-methyl-2-oxobutanoate + (6R)-5,10-methylene-5,6,7,8-tetrahydrofolate + H2O = 2-dehydropantoate + (6S)-5,6,7,8-tetrahydrofolate. It functions in the pathway cofactor biosynthesis; (R)-pantothenate biosynthesis; (R)-pantoate from 3-methyl-2-oxobutanoate: step 1/2. Functionally, catalyzes the reversible reaction in which hydroxymethyl group from 5,10-methylenetetrahydrofolate is transferred onto alpha-ketoisovalerate to form ketopantoate. The polypeptide is 3-methyl-2-oxobutanoate hydroxymethyltransferase (Clostridium novyi (strain NT)).